Consider the following 215-residue polypeptide: tRNA (guanine-N(7)-)-methyltransferase (215 aa).

Residues aspartate 43, glutamate 68, asparagine 95, and aspartate 121 each coordinate S-adenosyl-L-methionine. Residue aspartate 121 is part of the active site. Substrate contacts are provided by lysine 125 and aspartate 157.

This sequence belongs to the class I-like SAM-binding methyltransferase superfamily. TrmB family.

The catalysed reaction is guanosine(46) in tRNA + S-adenosyl-L-methionine = N(7)-methylguanosine(46) in tRNA + S-adenosyl-L-homocysteine. The protein operates within tRNA modification; N(7)-methylguanine-tRNA biosynthesis. Functionally, catalyzes the formation of N(7)-methylguanine at position 46 (m7G46) in tRNA. This chain is tRNA (guanine-N(7)-)-methyltransferase, found in Trichormus variabilis (strain ATCC 29413 / PCC 7937) (Anabaena variabilis).